The following is a 403-amino-acid chain: MEELGLATAKVTVTKEASHHREADLYQKMKSLESKLDFFNIQEEYIKYEYKNLKRELLHAQEEVKRIRSVPLLIGQLLEMVDSNTGIVQSTSGSTLCVRILSTIDRELLKPSASVALQRHSNALVDTLPPESDSSIHLLGADEKPSESYSDIGGGDIQKQEMREAVELPLTHHNLYKQIGIDPPRGVLLYGPPGTGKTMLAKAVAHHTSAAFIRVVGSEFVQKYLGEGPRLVRDVFRLARENSPAIIFIDEIDAIATKRFDAQTGADREVQRILMELLNQMDGFDVSVNVKVIMATNRQDTLDPALLRPGRLDRKIEFPLPDRRQKRLIFQVITSKMNLSDEVDLEDYVSRPDKLSGAEIQSICQEAGMHAIRKNRYVILPKDFEKGYKASIKKNTHEFNFYN.

Methionine 1 carries the N-acetylmethionine modification. Residue 191–198 (GPPGTGKT) participates in ATP binding.

This sequence belongs to the AAA ATPase family.

The protein localises to the cytoplasm. The protein resides in the nucleus. In terms of biological role, the 26S proteasome is involved in the ATP-dependent degradation of ubiquitinated proteins. The regulatory (or ATPase) complex confers ATP dependency and substrate specificity to the 26S complex. This chain is 26S proteasome regulatory subunit 6B homolog (psmC4), found in Dictyostelium discoideum (Social amoeba).